We begin with the raw amino-acid sequence, 556 residues long: 2-succinyl-5-enolpyruvyl-6-hydroxy-3-cyclohexene-1-carboxylate synthase (556 aa).

Belongs to the TPP enzyme family. MenD subfamily. In terms of assembly, homodimer. The cofactor is Mg(2+). Mn(2+) is required as a cofactor. It depends on thiamine diphosphate as a cofactor.

It carries out the reaction isochorismate + 2-oxoglutarate + H(+) = 5-enolpyruvoyl-6-hydroxy-2-succinyl-cyclohex-3-ene-1-carboxylate + CO2. Its pathway is quinol/quinone metabolism; 1,4-dihydroxy-2-naphthoate biosynthesis; 1,4-dihydroxy-2-naphthoate from chorismate: step 2/7. It participates in quinol/quinone metabolism; menaquinone biosynthesis. In terms of biological role, catalyzes the thiamine diphosphate-dependent decarboxylation of 2-oxoglutarate and the subsequent addition of the resulting succinic semialdehyde-thiamine pyrophosphate anion to isochorismate to yield 2-succinyl-5-enolpyruvyl-6-hydroxy-3-cyclohexene-1-carboxylate (SEPHCHC). The chain is 2-succinyl-5-enolpyruvyl-6-hydroxy-3-cyclohexene-1-carboxylate synthase from Salmonella choleraesuis (strain SC-B67).